Consider the following 173-residue polypeptide: Cytochrome b6-f complex subunit 4, chloroplastic (173 aa).

A chloroplast-targeting transit peptide spans 1-14 (ESALERRSSSVVMN). 3 helical membrane-spanning segments follow: residues 49-69 (LLYMFPVCILGTFAAIVGLAV), 108-128 (LLGVLSMAAVPAGLITVPFIE), and 144-164 (SVFLLGTVVAIWLGIGATLPI).

Belongs to the cytochrome b family. PetD subfamily. As to quaternary structure, the 4 large subunits of the cytochrome b6-f complex are cytochrome b6, subunit IV (17 kDa polypeptide, petD), cytochrome f and the Rieske protein, while the 4 small subunits are petG, petL, petM and petN. The complex functions as a dimer.

It localises to the plastid. It is found in the chloroplast thylakoid membrane. Functionally, component of the cytochrome b6-f complex, which mediates electron transfer between photosystem II (PSII) and photosystem I (PSI), cyclic electron flow around PSI, and state transitions. This Euglena gracilis protein is Cytochrome b6-f complex subunit 4, chloroplastic.